The primary structure comprises 349 residues: MIEFDNLTYLHGKPQGTGLLKANPEDFVVVEDLGFEPDGEGEHILVRILKNGCNTRFVADALAKFLKIHAREVSFAGQKDKHAVTEQWLCARVPGKEMPDLSAFQLEGCQVLEYARHKRKLRLGALKGNAFTLVLREVSNRDDVEQRLIDICVKGVPNYFGAQRFGIGGSNLQGALRWAQTNTPVRDRNKRSFWLSAARSALFNQIVAERLKKADVNQVVDGDALQLAGRGSWFVATTEELAELQRRVNDKELMITAALPGSGEWGTQREALAFEQAAVAEETELQTLLVREKVEAARRAMLLYPQQLSWNWWDDVTVEIHFWLPAGSFATSVVRELINTTGDYAHIAE.

F27 is a substrate binding site. D80 acts as the Nucleophile in catalysis. N129 contacts substrate. Positions 155–303 constitute a TRUD domain; that stretch reads GVPNYFGAQR…VEAARRAMLL (149 aa). Position 329 (F329) interacts with substrate.

Belongs to the pseudouridine synthase TruD family.

The catalysed reaction is uridine(13) in tRNA = pseudouridine(13) in tRNA. Functionally, responsible for synthesis of pseudouridine from uracil-13 in transfer RNAs. This chain is tRNA pseudouridine synthase D, found in Escherichia coli O45:K1 (strain S88 / ExPEC).